A 400-amino-acid polypeptide reads, in one-letter code: Chalcone synthase WHP1 (400 aa).

Cys-167 is an active-site residue.

Belongs to the thiolase-like superfamily. Chalcone/stilbene synthases family.

The catalysed reaction is (E)-4-coumaroyl-CoA + 3 malonyl-CoA + 3 H(+) = 2',4,4',6'-tetrahydroxychalcone + 3 CO2 + 4 CoA. It participates in secondary metabolite biosynthesis; flavonoid biosynthesis. The primary product of this enzyme is 4,2',4',6'-tetrahydroxychalcone (also termed naringenin-chalcone or chalcone) which can under specific conditions spontaneously isomerize into naringenin. The protein is Chalcone synthase WHP1 (WHP1) of Zea mays (Maize).